Here is a 456-residue protein sequence, read N- to C-terminus: Rap guanine nucleotide exchange factor-like 1 (456 aa).

The 237-residue stretch at 218-454 (EPEDVANHLT…FELSYKLEAN (237 aa)) folds into the Ras-GEF domain.

Functionally, probable guanine nucleotide exchange factor (GEF). The sequence is that of Rap guanine nucleotide exchange factor-like 1 (RAPGEFL1) from Pongo pygmaeus (Bornean orangutan).